The following is a 309-amino-acid chain: tRNA pseudouridine synthase B (309 aa).

Residue D39 is the Nucleophile of the active site.

It belongs to the pseudouridine synthase TruB family. Type 1 subfamily.

The enzyme catalyses uridine(55) in tRNA = pseudouridine(55) in tRNA. Responsible for synthesis of pseudouridine from uracil-55 in the psi GC loop of transfer RNAs. This chain is tRNA pseudouridine synthase B, found in Bacillus velezensis (strain DSM 23117 / BGSC 10A6 / LMG 26770 / FZB42) (Bacillus amyloliquefaciens subsp. plantarum).